Reading from the N-terminus, the 240-residue chain is tRNA (guanine-N(1)-)-methyltransferase (240 aa).

S-adenosyl-L-methionine contacts are provided by residues G110 and 129–134; that span reads LGDFVL.

The protein belongs to the RNA methyltransferase TrmD family. In terms of assembly, homodimer.

It is found in the cytoplasm. The catalysed reaction is guanosine(37) in tRNA + S-adenosyl-L-methionine = N(1)-methylguanosine(37) in tRNA + S-adenosyl-L-homocysteine + H(+). In terms of biological role, specifically methylates guanosine-37 in various tRNAs. This chain is tRNA (guanine-N(1)-)-methyltransferase, found in Clostridium botulinum (strain Langeland / NCTC 10281 / Type F).